The following is a 2439-amino-acid chain: Protein roller-3 (2439 aa).

The signal sequence occupies residues 1-26 (MLDFPRFSLFLFLLFSSFLFSSFVHA). Over 27–1851 (ATVFSSSLKT…EEEKGGILPY (1825 aa)) the chain is Extracellular. N-linked (GlcNAc...) asparagine glycans are attached at residues asparagine 64, asparagine 182, asparagine 334, asparagine 394, asparagine 496, asparagine 533, asparagine 657, asparagine 766, asparagine 868, asparagine 1003, asparagine 1036, asparagine 1090, and asparagine 1261. Positions 618-720 (KPRIVAVSSI…STSNTALPDL (103 aa)) constitute a Fibronectin type-III 1 domain. 4 Fibronectin type-III domains span residues 1403–1503 (SKGI…TGFG), 1507–1628 (APRD…TLDV), 1629–1732 (PGTL…IQQA), and 1738–1843 (VPTA…EKEE). 4 N-linked (GlcNAc...) asparagine glycosylation sites follow: asparagine 1567, asparagine 1636, asparagine 1677, and asparagine 1779. A helical transmembrane segment spans residues 1852-1872 (FLGISIILLLAAMILVGCFWL). Residues 1873-2439 (KSRRRQQMKK…GGTCRSVSQV (567 aa)) are Cytoplasmic-facing. Positions 1928 to 2199 (VEIVRHISDC…ATILKIFETC (272 aa)) constitute a Protein kinase domain. Residues 1934–1942 (ISDCSYGSV) and lysine 1963 contribute to the ATP site. Disordered stretches follow at residues 2214–2277 (NEGS…RPAT), 2315–2348 (SQRP…NRTN), and 2412–2439 (HLRA…VSQV). Polar residues-rich tracts occupy residues 2216 to 2233 (GSDN…SSRE), 2334 to 2347 (ATSS…SNRT), and 2420 to 2439 (PPTR…VSQV).

Its subcellular location is the membrane. In terms of biological role, involved in larval development and locomotion. This is Protein roller-3 from Caenorhabditis briggsae.